Reading from the N-terminus, the 378-residue chain is Histidinol-phosphate aminotransferase (378 aa).

The segment at Met1–Gly20 is disordered. Over residues Glu7 to Pro17 the composition is skewed to basic and acidic residues. An N6-(pyridoxal phosphate)lysine modification is found at Lys232.

This sequence belongs to the class-II pyridoxal-phosphate-dependent aminotransferase family. Histidinol-phosphate aminotransferase subfamily. Homodimer. The cofactor is pyridoxal 5'-phosphate.

It carries out the reaction L-histidinol phosphate + 2-oxoglutarate = 3-(imidazol-4-yl)-2-oxopropyl phosphate + L-glutamate. Its pathway is amino-acid biosynthesis; L-histidine biosynthesis; L-histidine from 5-phospho-alpha-D-ribose 1-diphosphate: step 7/9. This Azorhizobium caulinodans (strain ATCC 43989 / DSM 5975 / JCM 20966 / LMG 6465 / NBRC 14845 / NCIMB 13405 / ORS 571) protein is Histidinol-phosphate aminotransferase.